The primary structure comprises 319 residues: ATP-dependent 6-phosphofructokinase (319 aa).

Residue glycine 11 participates in ATP binding. Residue 21–25 participates in ADP binding; it reads RAVVR. ATP is bound by residues 72 to 73 and 102 to 105; these read RC and GDGS. Aspartate 103 is a binding site for Mg(2+). Residue 125–127 participates in substrate binding; that stretch reads TID. The active-site Proton acceptor is the aspartate 127. Residue arginine 154 participates in ADP binding. Substrate-binding positions include arginine 162 and 169 to 171; that span reads MGR. ADP is bound by residues 185 to 187, arginine 211, and 213 to 215; these read GAE and KKH. Substrate contacts are provided by residues glutamate 222, arginine 243, and 249–252; that span reads HIQR.

Belongs to the phosphofructokinase type A (PFKA) family. ATP-dependent PFK group I subfamily. Prokaryotic clade 'B1' sub-subfamily. In terms of assembly, homotetramer. Mg(2+) is required as a cofactor.

The protein localises to the cytoplasm. It catalyses the reaction beta-D-fructose 6-phosphate + ATP = beta-D-fructose 1,6-bisphosphate + ADP + H(+). It participates in carbohydrate degradation; glycolysis; D-glyceraldehyde 3-phosphate and glycerone phosphate from D-glucose: step 3/4. With respect to regulation, allosterically activated by ADP and other diphosphonucleosides, and allosterically inhibited by phosphoenolpyruvate. Functionally, catalyzes the phosphorylation of D-fructose 6-phosphate to fructose 1,6-bisphosphate by ATP, the first committing step of glycolysis. The polypeptide is ATP-dependent 6-phosphofructokinase (Shouchella clausii (strain KSM-K16) (Alkalihalobacillus clausii)).